The primary structure comprises 21 residues: Glucan endo-1,3-beta-glucosidase 2 (21 aa).

The interval 1-21 is disordered; that stretch reads APGDLLWSDEFDGAAGSAPNP.

The enzyme catalyses Hydrolysis of (1-&gt;3)-beta-D-glucosidic linkages in (1-&gt;3)-beta-D-glucans.. This is Glucan endo-1,3-beta-glucosidase 2 from Papiliotrema laurentii (Cryptococcus laurentii).